The following is a 298-amino-acid chain: GTPase Era (298 aa).

Residues 3 to 170 (KSGFVAILGR…VQLLKDNLEE (168 aa)) enclose the Era-type G domain. The segment at 11 to 18 (GRPNVGKS) is G1. 11-18 (GRPNVGKS) contacts GTP. The tract at residues 37–41 (QTTRN) is G2. A G3 region spans residues 58 to 61 (DTPG). Residues 58 to 62 (DTPGI) and 120 to 123 (NKID) each bind GTP. The segment at 120-123 (NKID) is G4. Residues 149–151 (ISA) are G5. A KH type-2 domain is found at 201–279 (TQQEVPHSVA…YLETWVKVKK (79 aa)).

This sequence belongs to the TRAFAC class TrmE-Era-EngA-EngB-Septin-like GTPase superfamily. Era GTPase family. In terms of assembly, monomer.

It is found in the cytoplasm. The protein localises to the cell membrane. Its function is as follows. An essential GTPase that binds both GDP and GTP, with rapid nucleotide exchange. Plays a role in 16S rRNA processing and 30S ribosomal subunit biogenesis and possibly also in cell cycle regulation and energy metabolism. This Streptococcus equi subsp. equi (strain 4047) protein is GTPase Era.